A 1843-amino-acid polypeptide reads, in one-letter code: Xin actin-binding repeat-containing protein 1 (1843 aa).

The segment covering 1–10 (MADTQTQVAP) has biased composition (polar residues). A disordered region spans residues 1–48 (MADTQTQVAPTPTMRMATAEDLPLPPPPALEDLPLPPPKESFSKFHQQ). The tract at residues 1–54 (MADTQTQVAPTPTMRMATAEDLPLPPPPALEDLPLPPPKESFSKFHQQRQASEL) is interaction with VASP. Positions 23-39 (PLPPPPALEDLPLPPPK) are enriched in pro residues. Xin repeat units follow at residues 89-104 (GDVQ…WRLD), 121-136 (GDVQ…GSFA), 151-166 (GDVR…KPLD), and 186-201 (GDVQ…RPLD). Residues 132-151 (EGSFANSTDQEPTRPQPGGG) are disordered. Phosphoserine is present on residues serine 205, serine 208, and serine 213. 2 Xin repeats span residues 226 to 241 (GDVK…EPLC) and 264 to 279 (NAVR…RPLD). Serine 295 carries the phosphoserine modification. The stretch at 302-317 (PDVSATRWIFETQPLD) is one Xin 7 repeat. Serine 332 carries the phosphoserine modification. 2 Xin repeats span residues 340–355 (PDVQ…RALD) and 376–391 (GDVR…KPLD). Positions 406 to 432 (DPQDGEGHLSSDSSSALPFSQSAPQRD) are disordered. A compositionally biased stretch (low complexity) spans 415-429 (SSDSSSALPFSQSAP). The stretch at 436–451 (GDVKTFKNLFETLPLD) is one Xin 10 repeat. Positions 455–479 (QGEVLAHGSPSREEGTDSAGQAQGI) are disordered. 2 Xin repeats span residues 507–522 (GDVQ…QPLD) and 545–560 (GDVG…QPLE). Residues 531–632 (IDVVRGITRQ…AQSCTWMFKP (102 aa)) form an interaction with CTNNB1 region. A compositionally biased stretch (basic and acidic residues) spans 564–577 (QREQQERQKEEGKS). The tract at residues 564 to 591 (QREQQERQKEEGKSQGDPQPEAPPKGDV) is disordered. Xin repeat units follow at residues 589–604 (GDVQ…CPMS), 621–636 (AEAQ…QPVD), 654–669 (GERQ…EPLQ), 691–706 (GQVS…LEAG), and 723–738 (GSVH…CPMG). Disordered stretches follow at residues 943–999 (SLRW…QAIG), 1063–1205 (AEAQ…MAWG), 1238–1277 (SGPQ…HRAE), 1289–1471 (DPLL…QKEL), and 1561–1696 (MSSL…DVSV). 2 stretches are compositionally biased toward polar residues: residues 1064–1073 (EAQSLHQQVL) and 1080–1089 (PTPTATSNPI). The span at 1294-1311 (SHSSPAGQRTPGGSQTKT) shows a compositional bias: polar residues. The span at 1357 to 1368 (GQREHQRGERDT) shows a compositional bias: basic and acidic residues. The segment covering 1393-1424 (GHSQPSLQHGLSTTAPRPTKNQATGSNAQSSE) has biased composition (polar residues). Residues 1462-1490 (DSLQRNQKELQGLLNQVQALEKEAASSVD) are a coiled coil. Composition is skewed to polar residues over residues 1588-1600 (VTVS…SGSG) and 1663-1679 (SRDS…QSAT). Positions 1685 to 1843 (TPSFKGNPDV…SCSYSQPAAQ (159 aa)) are interaction with FLNC.

This sequence belongs to the Xin family. Interacts (via N-terminus) with CTTN; the interaction promotes CTTN localization to intercalated disks in cardiomyocytes. Interacts with CTNNB1. Interacts with FLNC and VASP. Interacts with F-actin. As to expression, expressed in skeletal muscle at areas of Z-disk disruption in a longitudinal pattern spanning one or more sarcomeres (at protein level). In terms of tissue distribution, expressed in the heart (at protein level). Expressed in the heart.

The protein resides in the cell junction. Its subcellular location is the adherens junction. The protein localises to the desmosome. In terms of biological role, protects actin filaments from depolymerization. Required for correct cardiac intercalated disk ultrastructure via maintenance of cell-cell adhesion stability, and as a result maintains cardiac organ morphology, conductance and heart beat rhythm. Required for development of normal skeletal muscle morphology and muscle fiber type composition. Plays a role in regulating muscle satellite cell activation and survival, as a result promotes muscle fiber recovery from injury and fatigue. This Homo sapiens (Human) protein is Xin actin-binding repeat-containing protein 1.